The sequence spans 175 residues: Pancreatic beta cell growth factor (175 aa).

The N-terminal stretch at 1 to 26 (MMLPMTLCRMSWMLLSCLMFLSWVEG) is a signal peptide. Residues 38 to 175 (ITCPQGSVAY…ELPYICKFKV (138 aa)) enclose the C-type lectin domain. 3 cysteine pairs are disulfide-bonded: cysteine 40–cysteine 51, cysteine 68–cysteine 171, and cysteine 146–cysteine 163.

Expressed only in CW animals pancreas and to a lesser extent in duodenum. In pancreas it is found in acinar cells, but not in islets.

It localises to the secreted. Constituent of ilotropin, which is a partially purified preparation of cellophane wrapping (CW) pancreata. Capable of initiating duct cell proliferation, a prerequisite for islet neogenesis. In Mesocricetus auratus (Golden hamster), this protein is Pancreatic beta cell growth factor (INGAP).